Consider the following 512-residue polypeptide: MEKLKSELWMTAVATCMSLLLYLTILRRRHASGGRSLALPPGPTPLPLIGNLLCLGGIFHQTLAKLARVHGPVMTLKLGLTTAVVVSSAEAAREAYTKHDQRLAARPVPDAFRANGFSERSIVFSPSSDPQWKNLRGIHATHIFSPRALAALRGIRERKVRDIVGYIRTVAGEEMCVREVVHNGVLNLISTSFFSMDMADVRSESARGLRGLIEDIIATVAGPNVSDFFPFLRQLDLQGLRRQTGSHLGIVFGLLDDIIDRRMAETRDHPDKQRHGDFLDALISLASAGKIPRYHITYLLFDVFAAGADTMTTTVEWAMAELLRNPRVMAKVRAEVTDALGGRESFDEGDAASLTYLQCVFKEAMRLHPVGSILVPHLAVQDGVEIGGYAVPKGTTVIFNAWAIMRDPAAWESPDQFLPERFLHKEESSSPPLELRGKDYEYIPFGSGRRLCPGLPLAERAVPFILASLLHAFEWRLPDGMSPDDMDMTEKFATANVLATPLKAVPVASHTS.

The chain crosses the membrane as a helical span at residues 6-26; it reads SELWMTAVATCMSLLLYLTIL. Residue C452 coordinates heme.

Belongs to the cytochrome P450 family. Heme is required as a cofactor.

The protein resides in the membrane. The catalysed reaction is ent-sandaracopimaradien-3beta-ol + reduced [NADPH--hemoprotein reductase] + O2 = oryzalexin E + oxidized [NADPH--hemoprotein reductase] + H2O + H(+). In terms of biological role, enzyme of the diterpenoid metabolism involved in the biosynthesis of the oryzalexin class of phytoalexins. Can use ent-sandaracopimaradien and syn-stemodene as substrates, but no activity with syn-stemoden-19-oic acid. Hydroxylates 3-alpha-hydroxy-ent-sandaracopimaradiene at C-9-beta, resulting in a 3-alpha,9-beta-diol corresponding to oryzalexins E. This is Oryzalexin E synthase from Oryza sativa subsp. japonica (Rice).